Here is a 275-residue protein sequence, read N- to C-terminus: 5'-nucleotidase SurE (275 aa).

Residues Asp-12, Asp-13, Ser-44, and Asn-102 each contribute to the a divalent metal cation site.

This sequence belongs to the SurE nucleotidase family. A divalent metal cation serves as cofactor.

Its subcellular location is the cytoplasm. It carries out the reaction a ribonucleoside 5'-phosphate + H2O = a ribonucleoside + phosphate. Nucleotidase that shows phosphatase activity on nucleoside 5'-monophosphates. The protein is 5'-nucleotidase SurE of Synechococcus sp. (strain RCC307).